A 198-amino-acid polypeptide reads, in one-letter code: Dual specificity protein phosphatase 13B (198 aa).

Residues 45-193 (HIDEVWPSLF…LQVLDNRLGR (149 aa)) form the Tyrosine-protein phosphatase domain. Cysteine 138 serves as the catalytic Phosphocysteine intermediate.

It belongs to the protein-tyrosine phosphatase family. Non-receptor class dual specificity subfamily. Highly expressed in the testis (at protein level). Also found in the skeletal muscle.

The catalysed reaction is O-phospho-L-tyrosyl-[protein] + H2O = L-tyrosyl-[protein] + phosphate. It catalyses the reaction O-phospho-L-seryl-[protein] + H2O = L-seryl-[protein] + phosphate. It carries out the reaction O-phospho-L-threonyl-[protein] + H2O = L-threonyl-[protein] + phosphate. Functionally, dual specificity phosphatase that dephosphorylates MAPK8/JNK and MAPK14/p38, but not MAPK1/ERK2, in vitro. Exhibits intrinsic phosphatase activity towards both phospho-seryl/threonyl and -tyrosyl residues, with similar specific activities in vitro. The polypeptide is Dual specificity protein phosphatase 13B (Homo sapiens (Human)).